Here is a 344-residue protein sequence, read N- to C-terminus: Methionine import ATP-binding protein MetN (344 aa).

An ABC transporter domain is found at 2 to 241 (IELKNIGKQF…PTTQLAQQFI (240 aa)). 38–45 (GASGAGKS) contributes to the ATP binding site.

The protein belongs to the ABC transporter superfamily. Methionine importer (TC 3.A.1.24) family. The complex is composed of two ATP-binding proteins (MetN), two transmembrane proteins (MetI) and a solute-binding protein (MetQ).

Its subcellular location is the cell inner membrane. It catalyses the reaction L-methionine(out) + ATP + H2O = L-methionine(in) + ADP + phosphate + H(+). The enzyme catalyses D-methionine(out) + ATP + H2O = D-methionine(in) + ADP + phosphate + H(+). Functionally, part of the ABC transporter complex MetNIQ involved in methionine import. Responsible for energy coupling to the transport system. The chain is Methionine import ATP-binding protein MetN from Haemophilus ducreyi (strain 35000HP / ATCC 700724).